Consider the following 479-residue polypeptide: Adenylate kinase 8 (479 aa).

Adenylate kinase regions lie at residues 58 to 258 (PKVV…TYVQ) and 269 to 471 (PKVL…SGII). 67 to 72 (ASGKTT) contacts ATP. Residues 87–113 (TKESLLEREFSRLSVEAKSYYQVYKKI) form an NMP 1 region. AMP-binding positions include 140–143 (GIPE), Gln-147, and Arg-203. Residues 177–206 (GKRIDPVTGEIYHTTFDWPPEPEIQNRLRQ) form an LID 1 region. 278–283 (GSGKRL) contacts ATP. An NMP 2 region spans residues 298–327 (SCGQLLKEAVAAKSSFGELIQPFFEKRMTV). AMP contacts are provided by residues 325–327 (MTV), 354–357 (GFPR), and Gln-361. Positions 391–424 (LRRTDPVTGERFHLMYKPPPTIEVQVRLLQNPKD) are LID 2. Position 392 (Arg-392) interacts with ATP.

Belongs to the adenylate kinase family. In terms of assembly, interacts with CFAP45 and CFAP52; CFAP45 and AK8 dimerization may create a cavity at the interface of the dimer that can accommodate AMP.

It localises to the cytoplasm. Its subcellular location is the cytosol. The protein resides in the cytoskeleton. It is found in the cilium axoneme. It catalyses the reaction AMP + ATP = 2 ADP. The catalysed reaction is a 2'-deoxyribonucleoside 5'-diphosphate + ATP = a 2'-deoxyribonucleoside 5'-triphosphate + ADP. It carries out the reaction a ribonucleoside 5'-diphosphate + ATP = a ribonucleoside 5'-triphosphate + ADP. Nucleoside monophosphate (NMP) kinase that catalyzes the reversible transfer of the terminal phosphate group between nucleoside triphosphates and monophosphates. Has highest activity toward AMP, and weaker activity toward dAMP, CMP and dCMP. Also displays broad nucleoside diphosphate kinase activity. This is Adenylate kinase 8 (Ak8) from Mus musculus (Mouse).